The following is a 509-amino-acid chain: Protein disulfide-isomerase (509 aa).

The first 19 residues, 1 to 19, serve as a signal peptide directing secretion; sequence MLSRSLLCLALAWVARVGA. A Thioredoxin 1 domain is found at 20–136; the sequence is DAPEEEDNVL…IVNWLKKRTG (117 aa). Active-site nucleophile residues include cysteine 55 and cysteine 58. Cysteine 55 and cysteine 58 are joined by a disulfide. N6-acetyllysine is present on lysine 202. Residues lysine 224 and lysine 273 each carry the N6-succinyllysine modification. 2 positions are modified to phosphoserine: serine 333 and serine 359. Positions 335-477 constitute a Thioredoxin 2 domain; it reads ELTAEKITEF…FKKFLESGGQ (143 aa). Active-site nucleophile residues include cysteine 399 and cysteine 402. Cysteine 399 and cysteine 402 are joined by a disulfide. Serine 429 carries the phosphoserine modification. The segment at 473-509 is disordered; sequence ESGGQDGAGDDDDVDLEEALEPDMEEDDDQKAVKDEL. Acidic residues predominate over residues 480–501; the sequence is AGDDDDVDLEEALEPDMEEDDD. The Prevents secretion from ER signature appears at 506 to 509; that stretch reads KDEL.

It belongs to the protein disulfide isomerase family. As to quaternary structure, heterodimer; heterodimerizes with the protein microsomal triglyceride transfer MTTP. Homodimer. Homodimer. Monomers and homotetramers may also occur. Interacts with P4HA2, forming a heterotetramer consisting of 2 alpha subunits (P4HA2) and 2 beta (P4HB), where P4HB plays the role of a structural subunit; this tetramer catalyzes the formation of 4-hydroxyproline in collagen. Also constitutes the structural subunit of the microsomal triacylglycerol transfer protein MTTP in mammalian cells. Stabilizes both enzymes and retain them in the ER without contributing to the catalytic activity. Binds UBQLN1. Interacts with ERO1B. Interacts with ILDR2. Interacts with ERN1/IRE1A (via N-terminus); the interaction is enhanced by phosphorylation of P4HB by FAM20C in response to endoplasmic reticulum stress and results in attenuation of ERN1 activity. Post-translationally, phosphorylation of Ser-359 by FAM20C is induced by endoplasmic reticulum stress and results in a functional switch from oxidoreductase to molecular chaperone. It also promotes interaction with ERN1.

The protein resides in the endoplasmic reticulum. The protein localises to the endoplasmic reticulum lumen. It is found in the melanosome. Its subcellular location is the cell membrane. The enzyme catalyses Catalyzes the rearrangement of -S-S- bonds in proteins.. Functionally, this multifunctional protein catalyzes the formation, breakage and rearrangement of disulfide bonds. At the cell surface, seems to act as a reductase that cleaves disulfide bonds of proteins attached to the cell. May therefore cause structural modifications of exofacial proteins. Inside the cell, seems to form/rearrange disulfide bonds of nascent proteins. At high concentrations and following phosphorylation by FAM20C, functions as a chaperone that inhibits aggregation of misfolded proteins. At low concentrations, facilitates aggregation (anti-chaperone activity). May be involved with other chaperones in the structural modification of the TG precursor in hormone biogenesis. Also acts as a structural subunit of various enzymes such as prolyl 4-hydroxylase and microsomal triacylglycerol transfer protein MTTP. Receptor for LGALS9; the interaction retains P4HB at the cell surface of Th2 T helper cells, increasing disulfide reductase activity at the plasma membrane, altering the plasma membrane redox state and enhancing cell migration. The chain is Protein disulfide-isomerase (P4HB) from Cricetulus griseus (Chinese hamster).